Consider the following 531-residue polypeptide: Probable rhamnogalacturonate lyase A (531 aa).

An N-terminal signal peptide occupies residues Met1–Ala20. 2 disulfide bridges follow: Cys50–Cys93 and Cys184–Cys193.

Belongs to the polysaccharide lyase 4 family.

The protein resides in the secreted. The catalysed reaction is Endotype eliminative cleavage of L-alpha-rhamnopyranosyl-(1-&gt;4)-alpha-D-galactopyranosyluronic acid bonds of rhamnogalacturonan I domains in ramified hairy regions of pectin leaving L-rhamnopyranose at the reducing end and 4-deoxy-4,5-unsaturated D-galactopyranosyluronic acid at the non-reducing end.. In terms of biological role, pectinolytic enzymes consist of four classes of enzymes: pectin lyase, polygalacturonase, pectin methylesterase and rhamnogalacturonase. Degrades the rhamnogalacturonan I (RG-I) backbone of pectin. The chain is Probable rhamnogalacturonate lyase A (rglA) from Aspergillus niger (strain ATCC MYA-4892 / CBS 513.88 / FGSC A1513).